We begin with the raw amino-acid sequence, 155 residues long: Small ribosomal subunit protein uS7c (155 aa).

It belongs to the universal ribosomal protein uS7 family. In terms of assembly, part of the 30S ribosomal subunit.

The protein resides in the plastid. It is found in the chloroplast. Its function is as follows. One of the primary rRNA binding proteins, it binds directly to 16S rRNA where it nucleates assembly of the head domain of the 30S subunit. The chain is Small ribosomal subunit protein uS7c (rps7) from Canella winterana (Wild cinnamon).